Consider the following 590-residue polypeptide: Aspartate--tRNA ligase (590 aa).

Glu-175 provides a ligand contact to L-aspartate. Positions 199–202 (QIFK) are aspartate. An L-aspartate-binding site is contributed by Arg-221. ATP-binding positions include 221 to 223 (RDE) and Gln-230. His-449 is a binding site for L-aspartate. Residue Glu-483 participates in ATP binding. Residue Arg-490 coordinates L-aspartate. 535-538 (GLDR) contributes to the ATP binding site.

Belongs to the class-II aminoacyl-tRNA synthetase family. Type 1 subfamily. Homodimer.

It is found in the cytoplasm. It catalyses the reaction tRNA(Asp) + L-aspartate + ATP = L-aspartyl-tRNA(Asp) + AMP + diphosphate. Functionally, catalyzes the attachment of L-aspartate to tRNA(Asp) in a two-step reaction: L-aspartate is first activated by ATP to form Asp-AMP and then transferred to the acceptor end of tRNA(Asp). The polypeptide is Aspartate--tRNA ligase (Geobacillus kaustophilus (strain HTA426)).